The following is a 210-amino-acid chain: Transcription factor ALC (210 aa).

The disordered stretch occupies residues 1-49 (MGDSDVGDRLPPPSSSDELSSFLRQILSRTPTAQPSSPPKSTNVSSAET). Residues 27 to 48 (LSRTPTAQPSSPPKSTNVSSAE) are compositionally biased toward polar residues. Positions 93-142 (IDAQFHNLSEKKRRSKINEKMKALQKLIPNSNKTDKASMLDEAIEYLKQL) constitute a bHLH domain.

Homodimer. In terms of tissue distribution, expressed constitutively in roots, leaves, stems, and flowers. Confined to the valve margins of the silique.

The protein localises to the nucleus. In terms of biological role, required for the dehiscence of fruit, especially for the separation of the valve cells from the replum. Promotes the differentiation of a strip of labile nonlignified cells sandwiched between layers of lignified cells. This Arabidopsis thaliana (Mouse-ear cress) protein is Transcription factor ALC (ALC).